The chain runs to 275 residues: Adaptin ear-binding coat-associated protein 1 (275 aa).

The tract at residues 168-275 (AKKGGASKPR…APQPSNWVQF (108 aa)) is disordered. Residues 187 to 201 (LPPPPGGKVTIPPPS) show a composition bias toward pro residues. Threonine 211 carries the phosphothreonine modification. Positions 233–248 (SPAPVSTSAPAPVSTS) are enriched in low complexity. Short sequence motifs (WXXF motif) lie at residues 252 to 255 (WGDF) and 272 to 275 (WVQF). The span at 256–275 (STASSSVPNQAPQPSNWVQF) shows a compositional bias: polar residues.

This sequence belongs to the NECAP family. In terms of assembly, interacts with AP1G1 and AP2A1 components of the adapter protein complexes AP-1 and AP-2. Interacts with the GAE domain proteins GGA1, GGA2 and GGA3. In terms of tissue distribution, expressed primarily in brain (at protein level).

The protein resides in the cytoplasmic vesicle. It is found in the clathrin-coated vesicle membrane. The protein localises to the cell membrane. Involved in endocytosis. The sequence is that of Adaptin ear-binding coat-associated protein 1 (Necap1) from Mus musculus (Mouse).